The sequence spans 86 residues: Small ribosomal subunit protein bS20 (86 aa).

The protein belongs to the bacterial ribosomal protein bS20 family.

Functionally, binds directly to 16S ribosomal RNA. The polypeptide is Small ribosomal subunit protein bS20 (Rhodococcus erythropolis (strain PR4 / NBRC 100887)).